A 196-amino-acid chain; its full sequence is DnaA initiator-associating protein DiaA (196 aa).

An SIS domain is found at 34–196; it reads LVHSLLNGNK…DNTLFLHQDD (163 aa).

It belongs to the SIS family. DiaA subfamily. In terms of assembly, homotetramer; dimer of dimers.

Required for the timely initiation of chromosomal replication via direct interactions with the DnaA initiator protein. The protein is DnaA initiator-associating protein DiaA of Salmonella paratyphi A (strain ATCC 9150 / SARB42).